The following is a 337-amino-acid chain: uncharacterized protein (337 aa).

The region spanning Ser12 to Ile60 is the F-box domain.

This is an uncharacterized protein from Caenorhabditis elegans.